The sequence spans 44 residues: Keratin-associated protein 20-3 (44 aa).

The protein belongs to the KRTAP type 20 family. As to quaternary structure, interacts with hair keratins.

In the hair cortex, hair keratin intermediate filaments are embedded in an interfilamentous matrix, consisting of hair keratin-associated proteins (KRTAP), which are essential for the formation of a rigid and resistant hair shaft through their extensive disulfide bond cross-linking with abundant cysteine residues of hair keratins. The matrix proteins include the high-sulfur and high-glycine-tyrosine keratins. The polypeptide is Keratin-associated protein 20-3 (KRTAP20-3) (Homo sapiens (Human)).